Consider the following 702-residue polypeptide: Polyribonucleotide nucleotidyltransferase (702 aa).

Residues Asp-485 and Asp-491 each coordinate Mg(2+). Residues 552 to 612 form the KH domain; the sequence is PRTEIICIDP…EGVKKAISII (61 aa). The S1 motif domain occupies 622–690; sequence GEIYLGKVTK…NQGRINLSRK (69 aa).

The protein belongs to the polyribonucleotide nucleotidyltransferase family. It depends on Mg(2+) as a cofactor.

Its subcellular location is the cytoplasm. It catalyses the reaction RNA(n+1) + phosphate = RNA(n) + a ribonucleoside 5'-diphosphate. Its function is as follows. Involved in mRNA degradation. Catalyzes the phosphorolysis of single-stranded polyribonucleotides processively in the 3'- to 5'-direction. In Clostridium botulinum (strain Kyoto / Type A2), this protein is Polyribonucleotide nucleotidyltransferase.